The chain runs to 268 residues: 4-hydroxy-tetrahydrodipicolinate reductase (268 aa).

Residues 10–15 (GASGRM) and Asp-36 each bind NAD(+). Residue Arg-37 coordinates NADP(+). NAD(+) is bound by residues 99–101 (GTT) and 123–126 (SANM). The Proton donor/acceptor role is filled by His-156. Position 157 (His-157) interacts with (S)-2,3,4,5-tetrahydrodipicolinate. Lys-160 acts as the Proton donor in catalysis. 166–167 (GT) is a (S)-2,3,4,5-tetrahydrodipicolinate binding site.

It belongs to the DapB family.

The protein localises to the cytoplasm. The enzyme catalyses (S)-2,3,4,5-tetrahydrodipicolinate + NAD(+) + H2O = (2S,4S)-4-hydroxy-2,3,4,5-tetrahydrodipicolinate + NADH + H(+). It catalyses the reaction (S)-2,3,4,5-tetrahydrodipicolinate + NADP(+) + H2O = (2S,4S)-4-hydroxy-2,3,4,5-tetrahydrodipicolinate + NADPH + H(+). It functions in the pathway amino-acid biosynthesis; L-lysine biosynthesis via DAP pathway; (S)-tetrahydrodipicolinate from L-aspartate: step 4/4. Its function is as follows. Catalyzes the conversion of 4-hydroxy-tetrahydrodipicolinate (HTPA) to tetrahydrodipicolinate. The polypeptide is 4-hydroxy-tetrahydrodipicolinate reductase (Burkholderia mallei (strain NCTC 10247)).